Consider the following 318-residue polypeptide: Acetyl-coenzyme A carboxylase carboxyl transferase subunit alpha (318 aa).

The CoA carboxyltransferase C-terminal domain occupies H41–E295.

The protein belongs to the AccA family. As to quaternary structure, acetyl-CoA carboxylase is a heterohexamer composed of biotin carboxyl carrier protein (AccB), biotin carboxylase (AccC) and two subunits each of ACCase subunit alpha (AccA) and ACCase subunit beta (AccD).

The protein localises to the cytoplasm. It carries out the reaction N(6)-carboxybiotinyl-L-lysyl-[protein] + acetyl-CoA = N(6)-biotinyl-L-lysyl-[protein] + malonyl-CoA. Its pathway is lipid metabolism; malonyl-CoA biosynthesis; malonyl-CoA from acetyl-CoA: step 1/1. Component of the acetyl coenzyme A carboxylase (ACC) complex. First, biotin carboxylase catalyzes the carboxylation of biotin on its carrier protein (BCCP) and then the CO(2) group is transferred by the carboxyltransferase to acetyl-CoA to form malonyl-CoA. The sequence is that of Acetyl-coenzyme A carboxylase carboxyl transferase subunit alpha from Tolumonas auensis (strain DSM 9187 / NBRC 110442 / TA 4).